Consider the following 424-residue polypeptide: Synaptotagmin-1 (424 aa).

The Vesicular segment spans residues 1–60 (MVSESHHEALAAPPATTVAAALPSNVTEPAAPGGGGGKEDAFSNLKKKFMNELNKIPLPP). Asparagine 25 is a glycosylation site (N-linked (GlcNAc...) asparagine). The chain crosses the membrane as a helical span at residues 61–82 (WALIAIAIVAVLLILTCCFCLC). Residues cysteine 77, cysteine 78, cysteine 80, cysteine 82, and cysteine 85 are each lipidated (S-palmitoyl cysteine). Residues 83–424 (KKCLFKKKNK…EVDAMLAVKK (342 aa)) lie on the Cytoplasmic side of the membrane. Residues 117–142 (KDQALKDDDAETGLTDGEEKEEPKEV) are disordered. Positions 124–136 (DDAETGLTDGEEK) are enriched in acidic residues. A phospholipid binding region spans residues 138–384 (EPKEVEKLGK…AIGKVFVGYN (247 aa)). 2 consecutive C2 domains span residues 144 to 263 (KLGK…EEWR) and 275 to 408 (KLGD…AQWH). Ca(2+) contacts are provided by leucine 174, aspartate 175, aspartate 181, aspartate 233, phenylalanine 234, aspartate 235, serine 238, lysine 239, aspartate 241, aspartate 306, aspartate 312, aspartate 366, aspartate 368, and aspartate 374.

This sequence belongs to the synaptotagmin family. As to quaternary structure, homotetramer. It depends on Ca(2+) as a cofactor.

Its subcellular location is the cytoplasmic vesicle. It localises to the secretory vesicle membrane. The protein resides in the secretory vesicle. The protein localises to the synaptic vesicle membrane. It is found in the chromaffin granule membrane. Its subcellular location is the cytoplasm. Calcium sensor that participates in triggering neurotransmitter release at the synapse. May have a regulatory role in the membrane interactions during trafficking of synaptic vesicles at the active zone of the synapse. It binds acidic phospholipids with a specificity that requires the presence of both an acidic head group and a diacyl backbone. May play a role in dendrite formation by melanocytes. In Gallus gallus (Chicken), this protein is Synaptotagmin-1 (SYT1).